The sequence spans 913 residues: Cadherin-4 (913 aa).

Residues 1–20 (MTTGSVLPLLLLGLSGALRA) form the signal peptide. A propeptide spanning residues 21–166 (HREDLTVREA…SSGGLRRQKR (146 aa)) is cleaved from the precursor. Asparagine 146 is a glycosylation site (N-linked (GlcNAc...) asparagine). 5 consecutive Cadherin domains span residues 167–274 (DWVI…RPEF), 275–389 (INQV…PPEF), 390–504 (TTST…APYF), 505–610 (PSNH…DNAP), and 611–721 (QLLP…TVGA). Topologically, residues 167-731 (DWVIPPINVP…VAAAGLGTGA (565 aa)) are extracellular. 6 N-linked (GlcNAc...) asparagine glycosylation sites follow: asparagine 280, asparagine 409, asparagine 554, asparagine 629, asparagine 658, and asparagine 699. The helical transmembrane segment at 732 to 753 (IVAILICIVILLIMVLLFVVWM) threads the bilayer. The Cytoplasmic portion of the chain corresponds to 754–913 (KRREKERHTK…ADMYGGGEED (160 aa)).

As to expression, distributed widely in mouse tissues with high levels present in brain, skeletal muscle and thymus.

It localises to the cell membrane. Functionally, cadherins are calcium-dependent cell adhesion proteins. They preferentially interact with themselves in a homophilic manner in connecting cells; cadherins may thus contribute to the sorting of heterogeneous cell types. May play an important role in retinal development. The polypeptide is Cadherin-4 (Cdh4) (Mus musculus (Mouse)).